We begin with the raw amino-acid sequence, 340 residues long: Glycerol-3-phosphate dehydrogenase [NAD(P)+] (340 aa).

NADPH-binding residues include W11, R33, and K110. Residues K110, G144, and S146 each contribute to the sn-glycerol 3-phosphate site. A148 is an NADPH binding site. K199, D252, S262, R263, and N264 together coordinate sn-glycerol 3-phosphate. Residue K199 is the Proton acceptor of the active site. Residue R263 participates in NADPH binding. The NADPH site is built by V287 and E289.

Belongs to the NAD-dependent glycerol-3-phosphate dehydrogenase family.

It localises to the cytoplasm. It carries out the reaction sn-glycerol 3-phosphate + NAD(+) = dihydroxyacetone phosphate + NADH + H(+). The catalysed reaction is sn-glycerol 3-phosphate + NADP(+) = dihydroxyacetone phosphate + NADPH + H(+). The protein operates within membrane lipid metabolism; glycerophospholipid metabolism. Functionally, catalyzes the reduction of the glycolytic intermediate dihydroxyacetone phosphate (DHAP) to sn-glycerol 3-phosphate (G3P), the key precursor for phospholipid synthesis. The chain is Glycerol-3-phosphate dehydrogenase [NAD(P)+] from Polynucleobacter asymbioticus (strain DSM 18221 / CIP 109841 / QLW-P1DMWA-1) (Polynucleobacter necessarius subsp. asymbioticus).